The sequence spans 509 residues: ATP synthase subunit alpha (509 aa).

Position 169 to 176 (169 to 176 (GDRQTGKT)) interacts with ATP.

Belongs to the ATPase alpha/beta chains family. F-type ATPases have 2 components, CF(1) - the catalytic core - and CF(0) - the membrane proton channel. CF(1) has five subunits: alpha(3), beta(3), gamma(1), delta(1), epsilon(1). CF(0) has three main subunits: a(1), b(2) and c(9-12). The alpha and beta chains form an alternating ring which encloses part of the gamma chain. CF(1) is attached to CF(0) by a central stalk formed by the gamma and epsilon chains, while a peripheral stalk is formed by the delta and b chains.

Its subcellular location is the cell inner membrane. The catalysed reaction is ATP + H2O + 4 H(+)(in) = ADP + phosphate + 5 H(+)(out). Its function is as follows. Produces ATP from ADP in the presence of a proton gradient across the membrane. The alpha chain is a regulatory subunit. In Rhizobium etli (strain ATCC 51251 / DSM 11541 / JCM 21823 / NBRC 15573 / CFN 42), this protein is ATP synthase subunit alpha.